Consider the following 134-residue polypeptide: Putative integral membrane protein YxzK (134 aa).

A run of 4 helical transmembrane segments spans residues 3-23 (VIRI…GEAI), 35-55 (IVGL…VSII), 58-78 (GAGF…TGVI), and 89-109 (LMLL…AGFA).

The protein resides in the cell membrane. The protein is Putative integral membrane protein YxzK (yxzK) of Bacillus subtilis (strain 168).